We begin with the raw amino-acid sequence, 271 residues long: Mannosyl-3-phosphoglycerate phosphatase (271 aa).

The active-site Nucleophile is the D13. Positions 13, 15, and 214 each coordinate Mg(2+).

This sequence belongs to the HAD-like hydrolase superfamily. MPGP family. It depends on Mg(2+) as a cofactor.

It is found in the cytoplasm. The enzyme catalyses 2-O-(alpha-D-mannosyl)-3-phosphoglycerate + H2O = (2R)-2-O-(alpha-D-mannosyl)-glycerate + phosphate. This Escherichia coli O7:K1 (strain IAI39 / ExPEC) protein is Mannosyl-3-phosphoglycerate phosphatase.